Here is a 76-residue protein sequence, read N- to C-terminus: Sec-independent protein translocase protein TatA (76 aa).

The chain crosses the membrane as a helical span at residues M1–G21. The segment at N47–S76 is disordered. The span at I66–S76 shows a compositional bias: basic and acidic residues.

The protein belongs to the TatA/E family. The Tat system comprises two distinct complexes: a TatABC complex, containing multiple copies of TatA, TatB and TatC subunits, and a separate TatA complex, containing only TatA subunits. Substrates initially bind to the TatABC complex, which probably triggers association of the separate TatA complex to form the active translocon.

The protein localises to the cell inner membrane. Part of the twin-arginine translocation (Tat) system that transports large folded proteins containing a characteristic twin-arginine motif in their signal peptide across membranes. TatA could form the protein-conducting channel of the Tat system. The polypeptide is Sec-independent protein translocase protein TatA (Dechloromonas aromatica (strain RCB)).